A 104-amino-acid chain; its full sequence is Type VII secretion system extracellular protein B (104 aa).

This sequence belongs to the WXG100 family. Homodimer. When mixed with EsxA does not form heterodimers.

The protein localises to the secreted. Its function is as follows. Virulence factor that is important for the establishment of infection in the host. EsxB is required for EsxA synthesis as well as secretion. Mediates together with EsxA the release of S.aureus from the host cell. Also inhibits host cytokine production and thus modulates dendritic cell-mediated immunity. The sequence is that of Type VII secretion system extracellular protein B from Staphylococcus aureus (strain Mu50 / ATCC 700699).